The primary structure comprises 622 residues: Dehydrogenase xptC (622 aa).

Residues 1-18 (MAKLSVILLFRSLLLCGA) form the signal peptide. FAD contacts are provided by residues 47–48 (VS), 68–69 (EA), and 123–126 (NAMI). 5 N-linked (GlcNAc...) asparagine glycosylation sites follow: Asn-160, Asn-173, Asn-357, Asn-364, and Asn-480. Residue 598 to 599 (PM) participates in FAD binding.

This sequence belongs to the GMC oxidoreductase family. In terms of assembly, homodimer. FAD serves as cofactor.

The protein operates within secondary metabolite biosynthesis. Dehydrogenase involved in the conversion of monodictyphenone to the prenyl xanthones such as emericellin, shamixanthone and epishamixanthone. Monodictyphenone is first converted to variecoxanthone A via a paeciloxanthone intermediate by the consecutive actions of the FAD-dependent monooxygenase mdpD and the xanthone prenyltransferase xptB. XptB catalyzes regular O-prenylation at the hydroxy group of C-7 of the xanthone ring. Variecoxanthone A is further prenylated to emericellin by xptA before being reduced to shamixanthone and epishamixanthone by the dehydrogenase xptC. The sequence is that of Dehydrogenase xptC from Emericella nidulans (strain FGSC A4 / ATCC 38163 / CBS 112.46 / NRRL 194 / M139) (Aspergillus nidulans).